The chain runs to 149 residues: ER export of PMA1 protein 1 (149 aa).

Over 1–6 (MNLYGY) the chain is Lumenal. Residues 7–27 (FLLLIIVIAFIALLPLFSGIG) traverse the membrane as a helical; Signal-anchor for type II membrane protein segment. Topologically, residues 28-149 (TFKLTKPKSS…KKNEAYEGFV (122 aa)) are cytoplasmic.

As to quaternary structure, interacts with PMA1 and PSG1.

The protein resides in the endoplasmic reticulum membrane. It localises to the cytoplasmic vesicle. Its subcellular location is the COPI-coated vesicle membrane. The protein localises to the COPII-coated vesicle membrane. It is found in the golgi apparatus membrane. In terms of biological role, specific cargo receptor protein for the plasma membrane ATPase PMA1 that acts with PSG1 to promote the transport and maturation of PMA1. EXP1 and PSG1 probably act sequentially to promote PMA1 sorting between the ER and the Golgi, with EXP1 promoting PMA1 export from the ER to the Golgi while PSG1 has a role in PMA1 maturation or quality control in the Golgi. This is ER export of PMA1 protein 1 from Saccharomyces cerevisiae (strain ATCC 204508 / S288c) (Baker's yeast).